The primary structure comprises 468 residues: Beta-monoglucosyldiacylglycerol synthase (468 aa).

4 helical membrane passes run 51–71 (AALV…VSWG), 72–92 (SIFI…VVFA), 361–381 (FMLT…MAVV), and 387–407 (MLGP…FAGL).

It belongs to the glycosyltransferase 2 family. It depends on Mg(2+) as a cofactor.

The protein localises to the membrane. The catalysed reaction is a 1,2-diacyl-sn-glycerol + UDP-alpha-D-glucose = a 1,2-diacyl-3-O-(beta-D-glucopyranosyl)-sn-glycerol + UDP + H(+). Functionally, glucosyltransferase involved in the biosynthesis of the non-bilayer-forming membrane lipid beta-monoglucosyldiacylglycerol which contributes to regulate the properties and stability of the membrane. Catalyzes the transfer of a glucosyl residue from UDP-Glc to diacylglycerol (DAG) acceptor to form the corresponding beta-glucosyl-DAG (1,2-diacyl-3-O-(beta-D-glucopyranosyl)-sn-glycerol). It can only use UDP-Glc as sugar donor. This chain is Beta-monoglucosyldiacylglycerol synthase, found in Trichormus variabilis (strain ATCC 29413 / PCC 7937) (Anabaena variabilis).